Reading from the N-terminus, the 265-residue chain is Signal peptidase I (265 aa).

The Cytoplasmic portion of the chain corresponds to Met-1 to Ser-19. The helical transmembrane segment at Phe-20–Val-40 threads the bilayer. Over Pro-41 to Glu-265 the chain is Periplasmic. Active-site residues include Ser-44 and Lys-107.

The protein belongs to the peptidase S26 family.

It is found in the cell inner membrane. The catalysed reaction is Cleavage of hydrophobic, N-terminal signal or leader sequences from secreted and periplasmic proteins.. In Rickettsia canadensis (strain McKiel), this protein is Signal peptidase I (lepB).